A 243-amino-acid polypeptide reads, in one-letter code: Probable 2-phosphosulfolactate phosphatase (243 aa).

Belongs to the ComB family. Requires Mg(2+) as cofactor.

The catalysed reaction is (2R)-O-phospho-3-sulfolactate + H2O = (2R)-3-sulfolactate + phosphate. The chain is Probable 2-phosphosulfolactate phosphatase from Prochlorococcus marinus (strain MIT 9313).